The primary structure comprises 365 residues: Galactoside alpha-(1,2)-fucosyltransferase 1 (365 aa).

Topologically, residues 1-8 are cytoplasmic; that stretch reads MWVPSRRH. A helical; Signal-anchor for type II membrane protein transmembrane segment spans residues 9-28; that stretch reads LCLTFLLVCVLAAIFFLNVY. Residues 29-365 lie on the Lumenal side of the membrane; it reads QDLFYSGLDL…LSPLQMLAGP (337 aa). Asn-65, Asn-301, and Asn-327 each carry an N-linked (GlcNAc...) asparagine glycan.

The protein belongs to the glycosyltransferase 11 family.

Its subcellular location is the golgi apparatus. The protein localises to the golgi stack membrane. It catalyses the reaction a beta-D-galactosyl-(1-&gt;4)-N-acetyl-beta-D-glucosaminyl derivative + GDP-beta-L-fucose = an alpha-L-Fuc-(1-&gt;2)-beta-D-Gal-(1-&gt;4)-beta-D-GlcNAc derivative + GDP + H(+). It carries out the reaction a ganglioside GA1 + GDP-beta-L-fucose = a ganglioside Fuc-GA1 + GDP + H(+). The enzyme catalyses a beta-D-Gal-(1-&gt;3)-beta-D-GlcNAc-(1-&gt;3)-beta-D-Gal-(1-&gt;4)-beta-D-Glc-(1&lt;-&gt;1')-Cer(d18:1(4E)) + GDP-beta-L-fucose = alpha-L-fucosyl-(1-&gt;2)- beta-D-galactosyl-(1-&gt;3)-N-acetyl-beta-D-glucosaminyl-(1-&gt;3)-beta-D-galactosyl-(1-&gt;4)-beta-D-glucosyl-(1&lt;-&gt;1')-N-acylsphing-4-enine + GDP + H(+). The catalysed reaction is a neolactoside nLc4Cer(d18:1(4E)) + GDP-beta-L-fucose = a neolactoside IV(2)-alpha-Fuc-nLc4Cer(d18:1(4E)) + GDP + H(+). It catalyses the reaction a ganglioside GM1 + GDP-beta-L-fucose = a ganglioside Fuc-GM1 + GDP + H(+). It carries out the reaction beta-D-galactosyl-(1-&gt;3)-N-acetyl-D-galactosamine + GDP-beta-L-fucose = alpha-L-fucosyl-(1-&gt;2)-beta-D-galactosyl-(1-&gt;3)-N-acetyl-D-galactosamine + GDP + H(+). It participates in protein modification; protein glycosylation. Catalyzes the transfer of L-fucose, from a guanosine diphosphate-beta-L-fucose, to the terminal galactose residue of glycoconjugates through an alpha(1,2) linkage leading to H antigen synthesis that is an intermediate substrate in the synthesis of ABO blood group antigens. H antigen is essential for maturation of the glomerular layer of the main olfactory bulb, in cell migration and early cell-cell contacts during tumor associated angiogenesis. Preferentially fucosylates soluble lactose and to a lesser extent fucosylates glycolipids gangliosides GA1 and GM1a. This chain is Galactoside alpha-(1,2)-fucosyltransferase 1, found in Sus scrofa (Pig).